The chain runs to 331 residues: Thiamine thiazole synthase (331 aa).

Substrate is bound by residues serine 82, 103–104, glycine 111, and valine 176; that span reads EA. A 2,3-didehydroalanine (Cys) modification is found at cysteine 210. Residues aspartate 212, histidine 242, methionine 296, and 306–308 each bind substrate; that span reads RMG.

This sequence belongs to the THI4 family. As to quaternary structure, homooctamer. The cofactor is Fe cation. During the catalytic reaction, a sulfide is transferred from Cys-210 to a reaction intermediate, generating a dehydroalanine residue.

Its subcellular location is the cytoplasm. The protein localises to the nucleus. The catalysed reaction is [ADP-thiazole synthase]-L-cysteine + glycine + NAD(+) = [ADP-thiazole synthase]-dehydroalanine + ADP-5-ethyl-4-methylthiazole-2-carboxylate + nicotinamide + 3 H2O + 2 H(+). Functionally, involved in biosynthesis of the thiamine precursor thiazole. Catalyzes the conversion of NAD and glycine to adenosine diphosphate 5-(2-hydroxyethyl)-4-methylthiazole-2-carboxylic acid (ADT), an adenylated thiazole intermediate. The reaction includes an iron-dependent sulfide transfer from a conserved cysteine residue of the protein to a thiazole intermediate. The enzyme can only undergo a single turnover, which suggests it is a suicide enzyme. May have additional roles in adaptation to various stress conditions and in DNA damage tolerance. This is Thiamine thiazole synthase from Eremothecium gossypii (strain ATCC 10895 / CBS 109.51 / FGSC 9923 / NRRL Y-1056) (Yeast).